A 295-amino-acid chain; its full sequence is Bifunctional protein FolD (295 aa).

NADP(+) contacts are provided by residues 166–168 (GRS), Ser-195, and Ile-236.

Belongs to the tetrahydrofolate dehydrogenase/cyclohydrolase family. As to quaternary structure, homodimer.

It carries out the reaction (6R)-5,10-methylene-5,6,7,8-tetrahydrofolate + NADP(+) = (6R)-5,10-methenyltetrahydrofolate + NADPH. The catalysed reaction is (6R)-5,10-methenyltetrahydrofolate + H2O = (6R)-10-formyltetrahydrofolate + H(+). Its pathway is one-carbon metabolism; tetrahydrofolate interconversion. In terms of biological role, catalyzes the oxidation of 5,10-methylenetetrahydrofolate to 5,10-methenyltetrahydrofolate and then the hydrolysis of 5,10-methenyltetrahydrofolate to 10-formyltetrahydrofolate. This is Bifunctional protein FolD from Prosthecochloris aestuarii (strain DSM 271 / SK 413).